The sequence spans 376 residues: Putative peptide import ATP-binding protein BMEII0205 (376 aa).

Positions 1–25 are disordered; that stretch reads MPLRPALHLRTGKLRQTPTHNEPDG. The ABC transporter domain occupies 64–314; that stretch reads VRTDDLVRDF…PLHPYSRALL (251 aa). 106 to 113 contributes to the ATP binding site; that stretch reads GESGSGKS.

The protein belongs to the ABC transporter superfamily. As to quaternary structure, the complex is composed of two ATP-binding proteins (BMEII0205 and BMEII0206), two transmembrane proteins (BMEII0207/BMEII0208 and BMEII0209) and a solute-binding protein (BMEII0210).

It localises to the cell inner membrane. Its function is as follows. Probably part of an ABC transporter complex that could be involved in peptide import. Probably responsible for energy coupling to the transport system. The sequence is that of Putative peptide import ATP-binding protein BMEII0205 from Brucella melitensis biotype 1 (strain ATCC 23456 / CCUG 17765 / NCTC 10094 / 16M).